Here is a 263-residue protein sequence, read N- to C-terminus: 3-methyl-2-oxobutanoate hydroxymethyltransferase (263 aa).

Mg(2+) contacts are provided by Asp44 and Asp83. 3-methyl-2-oxobutanoate is bound by residues 44–45, Asp83, and Lys113; that span reads DS. Position 115 (Glu115) interacts with Mg(2+). Glu183 serves as the catalytic Proton acceptor.

It belongs to the PanB family. In terms of assembly, homodecamer; pentamer of dimers. Mg(2+) serves as cofactor.

It is found in the cytoplasm. It carries out the reaction 3-methyl-2-oxobutanoate + (6R)-5,10-methylene-5,6,7,8-tetrahydrofolate + H2O = 2-dehydropantoate + (6S)-5,6,7,8-tetrahydrofolate. It participates in cofactor biosynthesis; (R)-pantothenate biosynthesis; (R)-pantoate from 3-methyl-2-oxobutanoate: step 1/2. Its function is as follows. Catalyzes the reversible reaction in which hydroxymethyl group from 5,10-methylenetetrahydrofolate is transferred onto alpha-ketoisovalerate to form ketopantoate. This Trichodesmium erythraeum (strain IMS101) protein is 3-methyl-2-oxobutanoate hydroxymethyltransferase.